The primary structure comprises 210 residues: Proteasome subunit beta 2 (210 aa).

Positions 1–12 (MSNNVEEKILHG) are cleaved as a propeptide — removed in mature form; by autocatalysis. The active-site Nucleophile is Thr-13.

Belongs to the peptidase T1B family. As to quaternary structure, the 20S proteasome core is composed of 14 alpha and 14 beta subunits that assemble into four stacked heptameric rings, resulting in a barrel-shaped structure. The two inner rings, each composed of seven catalytic beta subunits, are sandwiched by two outer rings, each composed of seven alpha subunits. The catalytic chamber with the active sites is on the inside of the barrel. Has a gated structure, the ends of the cylinder being occluded by the N-termini of the alpha-subunits. Is capped at one or both ends by the proteasome regulatory ATPase, PAN.

The protein localises to the cytoplasm. The enzyme catalyses Cleavage of peptide bonds with very broad specificity.. The formation of the proteasomal ATPase PAN-20S proteasome complex, via the docking of the C-termini of PAN into the intersubunit pockets in the alpha-rings, triggers opening of the gate for substrate entry. Interconversion between the open-gate and close-gate conformations leads to a dynamic regulation of the 20S proteasome proteolysis activity. Its function is as follows. Component of the proteasome core, a large protease complex with broad specificity involved in protein degradation. In Nitrosopumilus maritimus (strain SCM1), this protein is Proteasome subunit beta 2.